The primary structure comprises 271 residues: Tryptophan synthase alpha chain (271 aa).

Catalysis depends on proton acceptor residues Glu49 and Asp60.

This sequence belongs to the TrpA family. In terms of assembly, tetramer of two alpha and two beta chains.

It catalyses the reaction (1S,2R)-1-C-(indol-3-yl)glycerol 3-phosphate + L-serine = D-glyceraldehyde 3-phosphate + L-tryptophan + H2O. It participates in amino-acid biosynthesis; L-tryptophan biosynthesis; L-tryptophan from chorismate: step 5/5. Functionally, the alpha subunit is responsible for the aldol cleavage of indoleglycerol phosphate to indole and glyceraldehyde 3-phosphate. This Burkholderia ambifaria (strain MC40-6) protein is Tryptophan synthase alpha chain.